Here is a 364-residue protein sequence, read N- to C-terminus: Probable dual-specificity RNA methyltransferase RlmN (364 aa).

Residue glutamate 109 is the Proton acceptor of the active site. One can recognise a Radical SAM core domain in the interval 123-351; sequence PKARLTVCVS…VSVRYSRGLE (229 aa). Residues cysteine 130 and cysteine 356 are joined by a disulfide bond. [4Fe-4S] cluster-binding residues include cysteine 137, cysteine 141, and cysteine 144. S-adenosyl-L-methionine contacts are provided by residues 184 to 185, serine 214, 237 to 239, and asparagine 313; these read GE and SLH. Cysteine 356 functions as the S-methylcysteine intermediate in the catalytic mechanism.

The protein belongs to the radical SAM superfamily. RlmN family. It depends on [4Fe-4S] cluster as a cofactor.

The protein localises to the cytoplasm. It carries out the reaction adenosine(2503) in 23S rRNA + 2 reduced [2Fe-2S]-[ferredoxin] + 2 S-adenosyl-L-methionine = 2-methyladenosine(2503) in 23S rRNA + 5'-deoxyadenosine + L-methionine + 2 oxidized [2Fe-2S]-[ferredoxin] + S-adenosyl-L-homocysteine. The enzyme catalyses adenosine(37) in tRNA + 2 reduced [2Fe-2S]-[ferredoxin] + 2 S-adenosyl-L-methionine = 2-methyladenosine(37) in tRNA + 5'-deoxyadenosine + L-methionine + 2 oxidized [2Fe-2S]-[ferredoxin] + S-adenosyl-L-homocysteine. Specifically methylates position 2 of adenine 2503 in 23S rRNA and position 2 of adenine 37 in tRNAs. This Nostoc punctiforme (strain ATCC 29133 / PCC 73102) protein is Probable dual-specificity RNA methyltransferase RlmN.